A 156-amino-acid chain; its full sequence is Ribosome maturation factor RimP (156 aa).

It belongs to the RimP family.

It is found in the cytoplasm. Its function is as follows. Required for maturation of 30S ribosomal subunits. In Prochlorococcus marinus (strain NATL2A), this protein is Ribosome maturation factor RimP.